A 338-amino-acid polypeptide reads, in one-letter code: Ketol-acid reductoisomerase (NADP(+)) (338 aa).

One can recognise a KARI N-terminal Rossmann domain in the interval 1–181 (MKVFYDKDAD…GGGRAGIIET (181 aa)). NADP(+)-binding positions include 24–27 (YGSQ), arginine 47, and serine 52. Residue histidine 107 is part of the active site. Glycine 133 serves as a coordination point for NADP(+). Residues 182 to 327 (NFREETETDL…SKLRAMMPWI (146 aa)) enclose the KARI C-terminal knotted domain. The Mg(2+) site is built by aspartate 190, glutamate 194, glutamate 226, and glutamate 230. Position 251 (serine 251) interacts with substrate.

It belongs to the ketol-acid reductoisomerase family. It depends on Mg(2+) as a cofactor.

It carries out the reaction (2R)-2,3-dihydroxy-3-methylbutanoate + NADP(+) = (2S)-2-acetolactate + NADPH + H(+). It catalyses the reaction (2R,3R)-2,3-dihydroxy-3-methylpentanoate + NADP(+) = (S)-2-ethyl-2-hydroxy-3-oxobutanoate + NADPH + H(+). Its pathway is amino-acid biosynthesis; L-isoleucine biosynthesis; L-isoleucine from 2-oxobutanoate: step 2/4. It functions in the pathway amino-acid biosynthesis; L-valine biosynthesis; L-valine from pyruvate: step 2/4. Its function is as follows. Involved in the biosynthesis of branched-chain amino acids (BCAA). Catalyzes an alkyl-migration followed by a ketol-acid reduction of (S)-2-acetolactate (S2AL) to yield (R)-2,3-dihydroxy-isovalerate. In the isomerase reaction, S2AL is rearranged via a Mg-dependent methyl migration to produce 3-hydroxy-3-methyl-2-ketobutyrate (HMKB). In the reductase reaction, this 2-ketoacid undergoes a metal-dependent reduction by NADPH to yield (R)-2,3-dihydroxy-isovalerate. This Paraburkholderia xenovorans (strain LB400) protein is Ketol-acid reductoisomerase (NADP(+)).